A 143-amino-acid chain; its full sequence is MSLSSKQKATVKDFFSKMSTRSDDIGAEALSRLVAVYPQTKSYFSHWKDASPGSAPVRKHGITTMGGVYDAVGKIDDLKGGLLSLSELHAFMLRVDPVNFKLLAHCMLVCMSMIFPEEFTPQVHVAVDKFLAQLALALAEKYR.

Ser-2 carries the post-translational modification N-acetylserine. The Globin domain maps to 2–143 (SLSSKQKATV…LALALAEKYR (142 aa)). His-60 contributes to the O2 binding site. His-89 serves as a coordination point for heme b.

This sequence belongs to the globin family. In terms of assembly, hb 2 is a heterotetramer of two alpha-2 and two beta-2 chains. In terms of tissue distribution, red blood cells.

In terms of biological role, involved in oxygen transport from gills to the various peripheral tissues. The sequence is that of Hemoglobin subunit alpha-2 (hba2) from Gadus morhua (Atlantic cod).